A 303-amino-acid polypeptide reads, in one-letter code: Coenzyme PQQ synthesis protein B (303 aa).

It belongs to the PqqB family.

It participates in cofactor biosynthesis; pyrroloquinoline quinone biosynthesis. Functionally, may be involved in the transport of PQQ or its precursor to the periplasm. This is Coenzyme PQQ synthesis protein B from Pseudomonas putida (strain GB-1).